The chain runs to 960 residues: Dynamin-like GTPase OPA1, mitochondrial (960 aa).

The N-terminal 87 residues, 1–87 (MWRAGRAALA…TKYGYQPRRN (87 aa)), are a transit peptide targeting the mitochondrion. Residues 88 to 96 (FWPARLAAR) are Mitochondrial matrix-facing. The chain crosses the membrane as a helical span at residues 97-113 (LLKLRYIILGSAVGGGY). Topologically, residues 114 to 770 (TAKKTFDEWK…NAIENMIGPD (657 aa)) are mitochondrial intermembrane. Residues 210–254 (SDKEKIDQLQEELLHTQLKYQRILERLEKENKELRKLVLQKDDKG) adopt a coiled-coil conformation. The LQQQIQ motif motif lies at 217-222 (QLQEEL). Lys-228 carries the N6-acetyllysine modification. The LQQQIQ motif motif lies at 234–239 (ERLEKE). The Dynamin-type G domain occupies 285 to 561 (QDHLPRVVVV…FWKMVRESVE (277 aa)). Residues 295–302 (GDQSAGKT) are G1 motif. Residues Ser-298, Gly-300, Lys-301, Thr-302, Ser-303, and Gly-317 each coordinate GTP. Residue Thr-302 participates in Mg(2+) binding. The interval 321–324 (MMTR) is G2 motif. Residues Thr-323 and Asp-398 each coordinate Mg(2+). The tract at residues 398-401 (DLPG) is G3 motif. The interval 467–470 (TKVD) is G4 motif. Residues Lys-468, Asp-470, and Thr-503 each contribute to the GTP site. The interval 501-504 (VVTG) is G5 motif. Stalk region stretches follow at residues 589 to 836 (DRNE…IKDT) and 874 to 928 (CNDV…VKLL). Positions 736-856 (SDKQQWDAAI…KTALNHCNLC (121 aa)) are paddle region. Residues 771–781 (WKKRWIYWKNR) lie within the membrane without spanning it. The Mitochondrial intermembrane portion of the chain corresponds to 782-960 (TQEQCVHNET…AFIEALHQEK (179 aa)). Cys-856 and Cys-874 are oxidised to a cystine. Positions 895 to 960 (RQQLTNTEVR…AFIEALHQEK (66 aa)) form a coiled coil.

Belongs to the TRAFAC class dynamin-like GTPase superfamily. Dynamin/Fzo/YdjA family. As to quaternary structure, oligomeric complex consisting of membrane-bound and soluble forms of OPA1. Interacts with RCC1L; RCC1L acts as a guanine nucleotide exchange factor (GEF) for OPA1 by exchanging bound GDP for free GTP. Interacts with CHCHD3 and IMMT; these interactions occur preferentially with soluble OPA1 forms. Interacts with PRELID1. Cleaved by OMA1 or YME1L downstream of the transmembrane region in response to different signals to generate soluble forms. Cleaved by OMA1 at position S1 following stress conditions, generating the short soluble form (Dynamin-like GTPase OPA1, short form; S-OPA1). AFG3L2 is involved in the regulation of OMA1-dependent processing of OPA1. PARL-dependent proteolytic processing releases an antiapoptotic soluble form not required for mitochondrial fusion. In terms of processing, cleavage at position S2 by YME1L is required to mediate oxidative phosphorylation (OXPHOS)-induced mitochondrial fusion. Cleavage occurs in the sequence motif Leu-Gln-Gln-Gln-Ile-Gln (LQQQIQ). As to expression, expressed in brain as well as retinal ganglion, starbust amacrine and horizontal cells of the retina. Absent from nerve fibers and photoreceptor cells of the retina.

It is found in the mitochondrion inner membrane. The protein resides in the mitochondrion intermembrane space. It carries out the reaction GTP + H2O = GDP + phosphate + H(+). Its activity is regulated as follows. Activated by guanine nucleotide exchange factor RCC1L. Its function is as follows. Dynamin-related GTPase that is essential for normal mitochondrial morphology by mediating fusion of the mitochondrial inner membranes, regulating cristae morphology and maintaining respiratory chain function. Exists in two forms: the transmembrane, long form (Dynamin-like GTPase OPA1, long form; L-OPA1), which is tethered to the inner mitochondrial membrane, and the short soluble form (Dynamin-like GTPase OPA1, short form; S-OPA1), which results from proteolytic cleavage and localizes in the intermembrane space. Both forms (L-OPA1 and S-OPA1) cooperate to catalyze the fusion of the mitochondrial inner membrane. The equilibrium between L-OPA1 and S-OPA1 is essential: excess levels of S-OPA1, produced by cleavage by OMA1 following loss of mitochondrial membrane potential, lead to an impaired equilibrium between L-OPA1 and S-OPA1, inhibiting mitochondrial fusion. The balance between L-OPA1 and S-OPA1 also influences cristae shape and morphology. Involved in remodeling cristae and the release of cytochrome c during apoptosis. Proteolytic processing by PARL in response to intrinsic apoptotic signals may lead to disassembly of OPA1 oligomers and release of the caspase activator cytochrome C (CYCS) into the mitochondrial intermembrane space. Acts as a regulator of T-helper Th17 cells, which are characterized by cells with fused mitochondria with tight cristae, by mediating mitochondrial membrane remodeling: OPA1 is required for interleukin-17 (IL-17) production. Its role in mitochondrial morphology is required for mitochondrial genome maintenance. In terms of biological role, constitutes the transmembrane long form (L-OPA1) that plays a central role in mitochondrial inner membrane fusion and cristae morphology. L-OPA1 and the soluble short form (S-OPA1) form higher-order helical assemblies that coordinate the fusion of mitochondrial inner membranes. Inner membrane-anchored L-OPA1 molecules initiate membrane remodeling by recruiting soluble S-OPA1 to rapidly polymerize into a flexible cylindrical scaffold encaging the mitochondrial inner membrane. Once at the membrane surface, the formation of S-OPA1 helices induce bilayer curvature. OPA1 dimerization through the paddle region, which inserts into cardiolipin-containing membrane, promotes GTP hydrolysis and the helical assembly of a flexible OPA1 lattice on the membrane, which drives membrane curvature and mitochondrial fusion. Plays a role in the maintenance and remodeling of mitochondrial cristae, some invaginations of the mitochondrial inner membrane that provide an increase in the surface area. Probably acts by forming helical filaments at the inside of inner membrane tubes with the shape and dimensions of crista junctions. The equilibrium between L-OPA1 and S-OPA1 influences cristae shape and morphology: increased L-OPA1 levels promote cristae stacking and elongated mitochondria, while increased S-OPA1 levels correlated with irregular cristae packing and round mitochondria shape. Functionally, constitutes the soluble short form (S-OPA1) generated by cleavage by OMA1, which plays a central role in mitochondrial inner membrane fusion and cristae morphology. The transmembrane long form (L-OPA1) and the S-OPA1 form higher-order helical assemblies that coordinate the fusion of mitochondrial inner membranes. Inner membrane-anchored L-OPA1 molecules initiate membrane remodeling by recruiting soluble S-OPA1 to rapidly polymerize into a flexible cylindrical scaffold encaging the mitochondrial inner membrane. Once at the membrane surface, the formation of S-OPA1 helices induce bilayer curvature. OPA1 dimerization through the paddle region, which inserts into cardiolipin-containing membrane, promotes GTP hydrolysis and the helical assembly of a flexible OPA1 lattice on the membrane, which drives membrane curvature and mitochondrial fusion. Excess levels of S-OPA1 produced by cleavage by OMA1 following stress conditions that induce loss of mitochondrial membrane potential, lead to an impaired equilibrium between L-OPA1 and S-OPA1, thereby inhibiting mitochondrial fusion. Involved in mitochondrial safeguard in response to transient mitochondrial membrane depolarization by mediating flickering: cleavage by OMA1 leads to excess production of S-OPA1, preventing mitochondrial hyperfusion. Plays a role in the maintenance and remodeling of mitochondrial cristae, some invaginations of the mitochondrial inner membrane that provide an increase in the surface area. Probably acts by forming helical filaments at the inside of inner membrane tubes with the shape and dimensions of crista junctions. The equilibrium between L-OPA1 and S-OPA1 influences cristae shape and morphology: increased L-OPA1 levels promote cristae stacking and elongated mitochondria, while increased S-OPA1 levels correlated with irregular cristae packing and round mitochondria shape. Isoforms that contain the alternative exon 4b are required for mitochondrial genome maintenance, possibly by anchoring the mitochondrial nucleoids to the inner mitochondrial membrane. The polypeptide is Dynamin-like GTPase OPA1, mitochondrial (Rattus norvegicus (Rat)).